A 157-amino-acid polypeptide reads, in one-letter code: Peptide methionine sulfoxide reductase MsrA (157 aa).

Residue C10 is part of the active site.

Belongs to the MsrA Met sulfoxide reductase family.

It carries out the reaction L-methionyl-[protein] + [thioredoxin]-disulfide + H2O = L-methionyl-(S)-S-oxide-[protein] + [thioredoxin]-dithiol. It catalyses the reaction [thioredoxin]-disulfide + L-methionine + H2O = L-methionine (S)-S-oxide + [thioredoxin]-dithiol. Has an important function as a repair enzyme for proteins that have been inactivated by oxidation. Catalyzes the reversible oxidation-reduction of methionine sulfoxide in proteins to methionine. The chain is Peptide methionine sulfoxide reductase MsrA from Clostridium perfringens (strain SM101 / Type A).